We begin with the raw amino-acid sequence, 247 residues long: Calpain small subunit 2 (247 aa).

Ca(2+) is bound by residues Ala88, Asp91, Glu93, Asp131, Asp133, Thr135, Lys137, Glu142, Asp161, Asp163, Ser165, and Asp204. EF-hand domains are found at residues 118 to 151 (FSLD…NNIK), 148 to 183 (NNIK…AGFQ), 184 to 212 (LNEQ…ISCL), and 213 to 247 (VRLD…TMYS).

Heterodimer of a large (catalytic) and a small (regulatory) subunit.

The protein localises to the cytoplasm. The protein resides in the cell membrane. Functionally, calcium-regulated non-lysosomal thiol-protease which catalyzes limited proteolysis of substrates involved in cytoskeletal remodeling and signal transduction. This small subunit may act as a tissue-specific chaperone of the large subunit, possibly by helping it fold into its correct conformation for activity. The polypeptide is Calpain small subunit 2 (Capns2) (Mus musculus (Mouse)).